A 106-amino-acid chain; its full sequence is Putative membrane protein insertion efficiency factor (106 aa).

It belongs to the UPF0161 family.

Its subcellular location is the cell inner membrane. Could be involved in insertion of integral membrane proteins into the membrane. In Methylacidiphilum infernorum (isolate V4) (Methylokorus infernorum (strain V4)), this protein is Putative membrane protein insertion efficiency factor.